The sequence spans 437 residues: Chromosomal replication initiator protein DnaA (437 aa).

Residues 1–74 (MNLAWNKILE…EACGDKIPVE (74 aa)) are domain I, interacts with DnaA modulators. The domain II stretch occupies residues 74–98 (EILIETKATSPLQSFLEKSFDQKDF). Positions 99–315 (QFNPDYTFET…GALNDIYLYK (217 aa)) are domain III, AAA+ region. Positions 142, 144, 145, and 146 each coordinate ATP. The interval 316–437 (KSYSLLFLNL…ERISSKYKLQ (122 aa)) is domain IV, binds dsDNA.

Belongs to the DnaA family. In terms of assembly, oligomerizes as a right-handed, spiral filament on DNA at oriC.

The protein resides in the cytoplasm. Plays an essential role in the initiation and regulation of chromosomal replication. ATP-DnaA binds to the origin of replication (oriC) to initiate formation of the DNA replication initiation complex once per cell cycle. Binds the DnaA box (a 9 base pair repeat at the origin) and separates the double-stranded (ds)DNA. Forms a right-handed helical filament on oriC DNA; dsDNA binds to the exterior of the filament while single-stranded (ss)DNA is stabiized in the filament's interior. The ATP-DnaA-oriC complex binds and stabilizes one strand of the AT-rich DNA unwinding element (DUE), permitting loading of DNA polymerase. After initiation quickly degrades to an ADP-DnaA complex that is not apt for DNA replication. Binds acidic phospholipids. The chain is Chromosomal replication initiator protein DnaA from Leptospira borgpetersenii serovar Hardjo-bovis (strain JB197).